A 454-amino-acid polypeptide reads, in one-letter code: N-myc 2 proto-oncogene protein (454 aa).

Disordered regions lie at residues 133 to 166, 231 to 270, and 326 to 374; these read EKMQ…HSGT, AAPP…EEEE, and SPYV…VRRR. Residues 256–270 show a composition bias toward acidic residues; sequence ALSDEVDEEEDEEEE. Positions 363–374 are enriched in basic and acidic residues; sequence RKSDSEDSVRRR. The 53-residue stretch at 371–423 folds into the bHLH domain; sequence VRRRNHNILERQRRNDLRSSFTTLRDHVPELVKNEKAAKVVILKKACEYVHYL. The segment at 423–444 is leucine-zipper; sequence LQAKEHQLLMEKEKLQARQQQL.

In terms of assembly, efficient DNA binding requires dimerization with another bHLH protein.

Its subcellular location is the nucleus. The sequence is that of N-myc 2 proto-oncogene protein (N-MYC2) from Otospermophilus beecheyi (California ground squirrel).